The chain runs to 294 residues: Cytidine deaminase (294 aa).

2 CMP/dCMP-type deaminase domains span residues 49-169 (TPQQ…FGPA) and 188-294 (ETQD…YIAL). 90 to 92 (NLE) provides a ligand contact to substrate. H103 provides a ligand contact to Zn(2+). E105 serves as the catalytic Proton donor. Zn(2+)-binding residues include C130 and C133.

It belongs to the cytidine and deoxycytidylate deaminase family. As to quaternary structure, homodimer. The cofactor is Zn(2+).

It carries out the reaction cytidine + H2O + H(+) = uridine + NH4(+). The enzyme catalyses 2'-deoxycytidine + H2O + H(+) = 2'-deoxyuridine + NH4(+). This enzyme scavenges exogenous and endogenous cytidine and 2'-deoxycytidine for UMP synthesis. In Pasteurella multocida (strain Pm70), this protein is Cytidine deaminase.